Reading from the N-terminus, the 457-residue chain is Glutamate--tRNA ligase 1 (457 aa).

Positions 9–19 (PSPTGYIHIGN) match the 'HIGH' region motif. Residues 250-254 (GLSKR) carry the 'KMSKS' region motif. Lys-253 provides a ligand contact to ATP.

The protein belongs to the class-I aminoacyl-tRNA synthetase family. Glutamate--tRNA ligase type 1 subfamily. In terms of assembly, monomer.

The protein resides in the cytoplasm. The catalysed reaction is tRNA(Glu) + L-glutamate + ATP = L-glutamyl-tRNA(Glu) + AMP + diphosphate. Functionally, catalyzes the attachment of glutamate to tRNA(Glu) in a two-step reaction: glutamate is first activated by ATP to form Glu-AMP and then transferred to the acceptor end of tRNA(Glu). This chain is Glutamate--tRNA ligase 1, found in Brucella abortus (strain S19).